Consider the following 150-residue polypeptide: Phylloplanin (150 aa).

The N-terminal stretch at 1–23 is a signal peptide; the sequence is MASAKIFLIFLLAALIATPAAFA.

Probably covalently linked to cuticular lipids and/or trichome exudate diterpens or sugar esters in order to increase the solubility in exudate and the dispersion on the leaf surface. In terms of tissue distribution, expressed in small glandular secreting trichomes (SGTs).

It is found in the secreted. Inhibits spore germination and leaf infection by fungal pathogens. The polypeptide is Phylloplanin (Nicotiana tabacum (Common tobacco)).